The chain runs to 225 residues: Iron-sulfur flavoprotein CD630_04720 (225 aa).

Residues cysteine 49, cysteine 52, cysteine 55, and cysteine 61 each contribute to the [4Fe-4S] cluster site.

Belongs to the SsuE family. Isf subfamily. In terms of assembly, homodimer. FMN is required as a cofactor. It depends on [4Fe-4S] cluster as a cofactor.

Its function is as follows. Redox-active protein probably involved in electron transport. The polypeptide is Iron-sulfur flavoprotein CD630_04720 (Clostridioides difficile (strain 630) (Peptoclostridium difficile)).